Consider the following 266-residue polypeptide: MTRLSNAFAKGRPALVTFVTGGDPTPGATDAILDALVEGGADVIELGMPFTDPMADGPAIQLANLRSLGAGTKTADVFRIAADFRARHPEVPLVLMGYANPMVTRGPDWFAAECVKAGVDGVICVDIPPEEDPELGPALRGAGVSLIRLATPTTDAARLPAVLEGSSGFLYYVSVAGITGMQQAAQASIEEAVARIKQSATIPVAVGFGVRTPEQAAAIAKVADGVVVGSALVDLVARHGADAAGPVKELTAALAAAVHSARKEIA.

Active-site proton acceptor residues include Glu45 and Asp56.

Belongs to the TrpA family. In terms of assembly, tetramer of two alpha and two beta chains.

It carries out the reaction (1S,2R)-1-C-(indol-3-yl)glycerol 3-phosphate + L-serine = D-glyceraldehyde 3-phosphate + L-tryptophan + H2O. The protein operates within amino-acid biosynthesis; L-tryptophan biosynthesis; L-tryptophan from chorismate: step 5/5. The alpha subunit is responsible for the aldol cleavage of indoleglycerol phosphate to indole and glyceraldehyde 3-phosphate. The chain is Tryptophan synthase alpha chain from Novosphingobium aromaticivorans (strain ATCC 700278 / DSM 12444 / CCUG 56034 / CIP 105152 / NBRC 16084 / F199).